The following is a 360-amino-acid chain: DNA replication and repair protein RecF (360 aa).

Position 30–37 (30–37) interacts with ATP; it reads GANGSGKT.

This sequence belongs to the RecF family.

The protein resides in the cytoplasm. In terms of biological role, the RecF protein is involved in DNA metabolism; it is required for DNA replication and normal SOS inducibility. RecF binds preferentially to single-stranded, linear DNA. It also seems to bind ATP. This is DNA replication and repair protein RecF from Acinetobacter baumannii (strain AB307-0294).